The primary structure comprises 355 residues: Lipoyl synthase (355 aa).

Residues 7-55 (HLSKFAYREEFAGNTEVLATAAYKEDCADASTGLTPKLPLEVEFGKMSK) form the RPE1 insert domain. [4Fe-4S] cluster contacts are provided by Cys86, Cys91, Cys97, Cys112, Cys116, Cys119, and Ser325. The region spanning 98–314 (WSKKHATVMI…ERVARTKGFL (217 aa)) is the Radical SAM core domain.

It belongs to the radical SAM superfamily. Lipoyl synthase family. [4Fe-4S] cluster is required as a cofactor.

The protein localises to the cytoplasm. The enzyme catalyses [[Fe-S] cluster scaffold protein carrying a second [4Fe-4S](2+) cluster] + N(6)-octanoyl-L-lysyl-[protein] + 2 oxidized [2Fe-2S]-[ferredoxin] + 2 S-adenosyl-L-methionine + 4 H(+) = [[Fe-S] cluster scaffold protein] + N(6)-[(R)-dihydrolipoyl]-L-lysyl-[protein] + 4 Fe(3+) + 2 hydrogen sulfide + 2 5'-deoxyadenosine + 2 L-methionine + 2 reduced [2Fe-2S]-[ferredoxin]. Its pathway is protein modification; protein lipoylation via endogenous pathway; protein N(6)-(lipoyl)lysine from octanoyl-[acyl-carrier-protein]: step 2/2. In terms of biological role, catalyzes the radical-mediated insertion of two sulfur atoms into the C-6 and C-8 positions of the octanoyl moiety bound to the lipoyl domains of lipoate-dependent enzymes, thereby converting the octanoylated domains into lipoylated derivatives. The chain is Lipoyl synthase from Rickettsia bellii (strain RML369-C).